The following is a 233-amino-acid chain: Probable chemoreceptor glutamine deamidase CheD (233 aa).

Belongs to the CheD family.

The catalysed reaction is L-glutaminyl-[protein] + H2O = L-glutamyl-[protein] + NH4(+). In terms of biological role, probably deamidates glutamine residues to glutamate on methyl-accepting chemotaxis receptors (MCPs), playing an important role in chemotaxis. The chain is Probable chemoreceptor glutamine deamidase CheD from Ralstonia nicotianae (strain ATCC BAA-1114 / GMI1000) (Ralstonia solanacearum).